A 391-amino-acid chain; its full sequence is O-methyltransferase ATR12 (391 aa).

S-adenosyl-L-methionine is bound by residues glycine 233 to glycine 234, aspartate 259, and aspartate 279 to phenylalanine 280. Catalysis depends on histidine 299, which acts as the Proton acceptor.

The protein belongs to the class I-like SAM-binding methyltransferase superfamily. Cation-independent O-methyltransferase family. COMT subfamily.

Its pathway is mycotoxin biosynthesis. Functionally, O-methyltransferase; part of the core atranone cluster (CAC) which products are predicted to catalyze most or all steps of mycotoxin atranone synthesis, starting from geranylgeranyl pyrophosphate (GGPP). The initial cyclization of GGPP to dolabellane is probably performed by the terpene cyclase ATR13. The Baeyer-Villiger oxidation near the end of the atranone synthesis, which converts atranones D and E to atranones F and G is predicted to be catalyzed by the monooxygenase ATR8. Of the CAC's other predicted gene products, the reducing PKS ATR6 might synthesize a polyketide chain. This polyketide is probably transferred onto the atranone backbone by the polyketide transferase ATR5. Other predicted CAC products include 4 oxygenases (ATR2, ATR3, ATR4, and ATR14), 3 short-chain reductases (ATR7, ATR9, and ATR10), and a methyltransferase (ATR12). These may all be involved in the various steps of atranone biosynthesis, although their specific roles must await experimental determination. The polypeptide is O-methyltransferase ATR12 (Stachybotrys chlorohalonatus (strain IBT 40285)).